The primary structure comprises 397 residues: CCA-adding enzyme (397 aa).

Residues glycine 26 and arginine 29 each contribute to the ATP site. Positions 26 and 29 each coordinate CTP. Mg(2+) is bound by residues aspartate 39 and aspartate 41. ATP-binding residues include arginine 110, aspartate 153, arginine 156, arginine 159, and arginine 162. Residues arginine 110, aspartate 153, arginine 156, arginine 159, and arginine 162 each contribute to the CTP site.

The protein belongs to the tRNA nucleotidyltransferase/poly(A) polymerase family. Bacterial CCA-adding enzyme type 3 subfamily. Homodimer. Mg(2+) is required as a cofactor.

The catalysed reaction is a tRNA precursor + 2 CTP + ATP = a tRNA with a 3' CCA end + 3 diphosphate. It carries out the reaction a tRNA with a 3' CCA end + 2 CTP + ATP = a tRNA with a 3' CCACCA end + 3 diphosphate. Its function is as follows. Catalyzes the addition and repair of the essential 3'-terminal CCA sequence in tRNAs without using a nucleic acid template. Adds these three nucleotides in the order of C, C, and A to the tRNA nucleotide-73, using CTP and ATP as substrates and producing inorganic pyrophosphate. tRNA 3'-terminal CCA addition is required both for tRNA processing and repair. Also involved in tRNA surveillance by mediating tandem CCA addition to generate a CCACCA at the 3' terminus of unstable tRNAs. While stable tRNAs receive only 3'-terminal CCA, unstable tRNAs are marked with CCACCA and rapidly degraded. The polypeptide is CCA-adding enzyme (Bacillus cereus (strain 03BB102)).